The chain runs to 387 residues: Fetuin-B (387 aa).

The signal sequence occupies residues 1–18; it reads MNVLLLLVLCTLAMGCGA. Cystatin fetuin-B-type domains follow at residues 25 to 139 and 150 to 258; these read AARP…YNCT and MTCP…VTCS. A glycan (N-linked (GlcNAc...) asparagine) is linked at asparagine 37. Disulfide bonds link cysteine 94/cysteine 105, cysteine 118/cysteine 138, cysteine 152/cysteine 155, cysteine 217/cysteine 225, and cysteine 238/cysteine 257. Asparagine 137 is a glycosylation site (N-linked (GlcNAc...) asparagine). Residues 264-306 form a disordered region; the sequence is APTPRGENATVNQRPANPSKTEELQQQNTAPTNSPTKAVPKGS. Asparagine 271 is a glycosylation site (N-linked (GlcNAc...) asparagine). Residues 272-299 are compositionally biased toward polar residues; the sequence is ATVNQRPANPSKTEELQQQNTAPTNSPT. Residues threonine 292 and threonine 295 are each glycosylated (O-linked (GalNAc...) threonine). Phosphoserine is present on serine 320. Residues 366–387 form a disordered region; sequence KEQRSAECPGPAQKGYPFILPS.

Belongs to the fetuin family. Liver and testis.

It localises to the secreted. Functionally, protease inhibitor required for egg fertilization. Required to prevent premature zona pellucida hardening before fertilization, probably by inhibiting the protease activity of ASTL, a protease that mediates the cleavage of ZP2 and triggers zona pellucida hardening. This Bos taurus (Bovine) protein is Fetuin-B (FETUB).